A 506-amino-acid chain; its full sequence is Putative basic amino acid antiporter YfcC (506 aa).

The next 13 membrane-spanning stretches (helical) occupy residues 19-39, 107-127, 148-168, 171-191, 208-228, 231-251, 287-307, 310-330, 352-372, 398-418, 419-439, 442-462, and 485-505; these read LVIIFFVAILTSLATWVVPVG, GTAVGIIMFMLVIGGAFGIVM, ILFIPALFILFSLGGAVFGMG, AVAFAIIIAPLMVRLGYDSIT, WMNPFCVVVAQGIAGVPVLSG, LRIVVWVIATLIGLIFTMVYA, WLVLIVLTAVMVWVIWGVIVN, FIPEIASQFFTMGLVIGIIGV, MMIAPALLVGFAKGILLLVGN, AVAAWFMLLFQAVFNFFVTSG, SGQAALTMPLLAPLGDLVGVN, VTVLAFQFGDGFSHIIYPTSA, and LLGLLFIMSSVVVIGAQLMGY.

To H.influenzae HI_0594. It to B.subtilis YcgA.

It is found in the cell inner membrane. Metabolomic profiling of different yfcC over-expression and deletion strains suggests that it may affect the glyoxylate shunt. This Escherichia coli (strain K12) protein is Putative basic amino acid antiporter YfcC (yfcC).